The chain runs to 334 residues: Transposase for insertion sequence element IS1328 (334 aa).

This sequence belongs to the transposase IS1111A/IS1328/IS1533 family.

Required for the transposition of the insertion element. The protein is Transposase for insertion sequence element IS1328 of Yersinia enterocolitica.